The chain runs to 127 residues: MSKSETYRIEVEAVAEYVEAQSNPEDDHYVFAYNITIRNTGTVAARLVSRHWVITDGTGHVQEVHGQGVVGEQPLLAPGESFRYTSGSVLETAVGTMHGSYQMEASDGHRFDAPIPAFMLAMPRVLH.

Positions 3–127 (KSETYRIEVE…FMLAMPRVLH (125 aa)) constitute an ApaG domain.

The sequence is that of Protein ApaG from Azoarcus sp. (strain BH72).